We begin with the raw amino-acid sequence, 655 residues long: MFKKLHMKIAVFVSIMLIITVVLLMLSSYLTLKPMITEDGKNTTQNVTQSLEQNIELQLKSYAISLSRLANGELTHTFVTKPSKEASRLFHDDIKQIKDNDDYVAMAYIGTAKKEMFTYPKADFAEDYDPTSRPWYKLAAETPDQVVWTEPYKDVVTGDMIVTASKAILDRQKVIGVASYDLKLSAIQSMVNKQKVPYKGFAFLADASGNLLAHPSNQGKNISKDQTLQTIASEKKGIQDVNGKMVVYQTIGETGWKVGTQFDTDQLMWISDKMNRANLWISLIALIITIILSYFLAKTITGPIQQLIVKTKAVSAGDLTVRAESKSKDEVGILTRDFNLMVENMKEMVEQVRLSSGKVSDTSEQLTAVAAETNETSGQIAKAIEEVAAGASEQASEVETINEKSESLSTKIRQIAEEAGGIKERSKSSEDASYKGLDALGQLLMKSNEANMETKKVETMLLDLENQTKNIEEVVTAISNISDQTNLLALNASIEAARAGESGRGFAVVADEVRKLAEQSALSTKHISETVKLIQLETKEASHAMVEASRMNDEQNSAIHETGEVLNTITAEMQSLVQGIDHIYAEIQRMSEEQLAISEAIQSISAISQESAAAAEEVNASTDEQLVTLDKVKHSTETLKHASQELMNTIAKFTL.

At 1 to 8 (MFKKLHMK) the chain is on the cytoplasmic side. Residues 9–29 (IAVFVSIMLIITVVLLMLSSY) traverse the membrane as a helical segment. Residues 30-276 (LTLKPMITED…LMWISDKMNR (247 aa)) lie on the Extracellular side of the membrane. A Cache domain is found at 148 to 225 (WTEPYKDVVT…SNQGKNISKD (78 aa)). The chain crosses the membrane as a helical span at residues 277–297 (ANLWISLIALIITIILSYFLA). Residues 298–350 (KTITGPIQQLIVKTKAVSAGDLTVRAESKSKDEVGILTRDFNLMVENMKEMVE) form the HAMP domain. Topologically, residues 298–655 (KTITGPIQQL…LMNTIAKFTL (358 aa)) are cytoplasmic. The region spanning 369 to 619 (VAAETNETSG…ESAAAAEEVN (251 aa)) is the Methyl-accepting transducer domain.

Belongs to the methyl-accepting chemotaxis (MCP) protein family. As to quaternary structure, interacts with FloT. Post-translationally, some glutamine residues are deamidated to glutamate by CheD and subsequently methylated.

Its subcellular location is the cell membrane. It localises to the membrane raft. Its function is as follows. Chemotactic-signal transducers respond to changes in the concentration of attractants and repellents in the environment, transduce a signal from the outside to the inside of the cell, and facilitate sensory adaptation through the variation of the level of methylation. All amino acids serve as attractants in B.subtilis, they appear to cause an increase in the turnover methyl groups, leading to methylation of an unidentified acceptor, while repellents have been shown to cause a decrease in methyl group turnover. The methyl groups are added by a methyltransferase and removed by a methylesterase. McpC is required for taxis to cysteine, proline, threonine, glycine, serine, lysine, valine and arginine and for aspartate, glutamine, histidine and glutamate. Primarily mediates response to positive stimulus of PTS carbohydrates. Greatly influences the duration or magnitude of the response to negative PTS carbohydrate stimulus. The chain is Methyl-accepting chemotaxis protein McpC (mcpC) from Bacillus subtilis (strain 168).